A 147-amino-acid polypeptide reads, in one-letter code: uncharacterized protein (147 aa).

Residues 1-137 enclose the HTH marR-type domain; the sequence is MRDNTIGSLI…LYELMTKVHK (137 aa). The segment at residues 53 to 76 is a DNA-binding region (H-T-H motif); the sequence is QMELAEKVTVTQGGISRMLTRLEK.

This is an uncharacterized protein from Bacillus anthracis.